Here is a 230-residue protein sequence, read N- to C-terminus: Orotidine 5'-phosphate decarboxylase (230 aa).

Residues Asp11, Lys34, 61-70 (DLKLHDIPNT), Thr117, Arg179, Gln188, Gly208, and Arg209 each bind substrate. Lys63 functions as the Proton donor in the catalytic mechanism.

It belongs to the OMP decarboxylase family. Type 1 subfamily. Homodimer.

It catalyses the reaction orotidine 5'-phosphate + H(+) = UMP + CO2. Its pathway is pyrimidine metabolism; UMP biosynthesis via de novo pathway; UMP from orotate: step 2/2. Its function is as follows. Catalyzes the decarboxylation of orotidine 5'-monophosphate (OMP) to uridine 5'-monophosphate (UMP). In Streptococcus pyogenes serotype M28 (strain MGAS6180), this protein is Orotidine 5'-phosphate decarboxylase.